A 154-amino-acid polypeptide reads, in one-letter code: UPF0225 protein Spro_2712 (154 aa).

It belongs to the UPF0225 family.

In Serratia proteamaculans (strain 568), this protein is UPF0225 protein Spro_2712.